A 154-amino-acid chain; its full sequence is Putative pre-16S rRNA nuclease (154 aa).

It belongs to the YqgF nuclease family.

It localises to the cytoplasm. Functionally, could be a nuclease involved in processing of the 5'-end of pre-16S rRNA. The chain is Putative pre-16S rRNA nuclease from Rickettsia bellii (strain OSU 85-389).